We begin with the raw amino-acid sequence, 206 residues long: LexA repressor (206 aa).

The segment at residues 28-48 is a DNA-binding region (H-T-H motif); it reads VREICAAVGLSSTSTVHGHLT. Catalysis depends on for autocatalytic cleavage activity residues Ser-127 and Lys-165.

The protein belongs to the peptidase S24 family. In terms of assembly, homodimer.

It carries out the reaction Hydrolysis of Ala-|-Gly bond in repressor LexA.. Represses a number of genes involved in the response to DNA damage (SOS response), including recA and lexA. In the presence of single-stranded DNA, RecA interacts with LexA causing an autocatalytic cleavage which disrupts the DNA-binding part of LexA, leading to derepression of the SOS regulon and eventually DNA repair. The polypeptide is LexA repressor (Lactobacillus delbrueckii subsp. bulgaricus (strain ATCC 11842 / DSM 20081 / BCRC 10696 / JCM 1002 / NBRC 13953 / NCIMB 11778 / NCTC 12712 / WDCM 00102 / Lb 14)).